The chain runs to 288 residues: Syntaxin-1A (288 aa).

Residues methionine 1–aspartate 13 show a composition bias toward basic and acidic residues. Residues methionine 1–valine 20 are disordered. At methionine 1–lysine 265 the chain is on the cytoplasmic side. A phosphoserine mark is found at serine 14, serine 64, and serine 95. Positions aspartate 68–serine 109 form a coiled coil. Serine 188 bears the Phosphoserine; by DAPK1 mark. Positions leucine 192–alanine 254 constitute a t-SNARE coiled-coil homology domain. Residues lysine 252, lysine 253, and lysine 256 each participate in a glycyl lysine isopeptide (Lys-Gly) (interchain with G-Cter in SUMO) cross-link. The chain crosses the membrane as a helical; Anchor for type IV membrane protein span at residues isoleucine 266–glycine 288.

It belongs to the syntaxin family. Part of the SNARE core complex containing SNAP25, VAMP2 and STX1A; this complex constitutes the basic catalytic machinery of the complex neurotransmitter release apparatus. The SNARE complex interacts with CPLX1. Interacts with STXBP1. The interaction with STXBP1 promotes assembly of the SNARE complex. Interacts (via C-terminus) with KCNB1 (via C-terminus); the interaction increases in a calcium-dependent manner and induces a pore-independent enhancement of exocytosis in neuroendocrine cells, chromaffin cells, pancreatic beta cells and from the soma of dorsal root ganglia (DRG) neurons. Interacts with SYTL4. Interacts with STXBP6. Interacts with PLCL1 (via C2 domain). Interacts with OTOF. Interacts with LGI3. Interacts (via the H3 domain) with SLC6A4 (via the N-terminus); this interaction regulates SLC4A6 channel conductance in thalamocortical neurons. Interacts with SYT6 and SYT8; the interaction is Ca(2+)-dependent. Interacts with VAMP8. Interacts with SNAP23. Interacts with VAPA and SYBU. Interacts with PRRT2. Interacts with SEPT8. Interacts with STXBP5L. Interacts with synaptotagmin-1/SYT1. Interacts with SEPTIN5; in the cerebellar cortex. Interacts with SEPTIN4; in the striatum. Phosphorylated by CK2. Phosphorylation at Ser-188 by DAPK1 significantly decreases its interaction with STXBP1. In terms of processing, sumoylated, sumoylation is required for regulation of synaptic vesicle endocytosis. Post-translationally, (Microbial infection) Targeted and hydrolyzed by C.botulinum neurotoxin type C (BoNT/C) which inhibits neurotransmitter release. Probably hydrolyzes the 253-Lys-|-Ala-254 bond.

It localises to the cytoplasmic vesicle. The protein resides in the secretory vesicle. It is found in the synaptic vesicle membrane. The protein localises to the synapse. Its subcellular location is the synaptosome. It localises to the cell membrane. In terms of biological role, plays an essential role in hormone and neurotransmitter calcium-dependent exocytosis and endocytosis. Part of the SNARE (Soluble NSF Attachment Receptor) complex composed of SNAP25, STX1A and VAMP2 which mediates the fusion of synaptic vesicles with the presynaptic plasma membrane. STX1A and SNAP25 are localized on the plasma membrane while VAMP2 resides in synaptic vesicles. The pairing of the three SNAREs from the N-terminal SNARE motifs to the C-terminal anchors leads to the formation of the SNARE complex, which brings membranes into close proximity and results in final fusion. Participates in the calcium-dependent regulation of acrosomal exocytosis in sperm. Also plays an important role in the exocytosis of hormones such as insulin or glucagon-like peptide 1 (GLP-1). The chain is Syntaxin-1A (STX1A) from Bos taurus (Bovine).